A 461-amino-acid chain; its full sequence is Chromosomal replication initiator protein DnaA (461 aa).

Residues 1 to 90 are domain I, interacts with DnaA modulators; sequence MAVSLWQQCI…RPSARPVAPA (90 aa). The domain II stretch occupies residues 91 to 124; the sequence is PVAAKPVNRQTKAQVGTTSFNTQAEPIINPNHRS. Residues 125–341 are domain III, AAA+ region; the sequence is NINPTYQFDN…GALNRVIANA (217 aa). The ATP site is built by Gly169, Gly171, Lys172, and Thr173. A domain IV, binds dsDNA region spans residues 342–461; it reads NFTGRPITID…YANLIRTLSS (120 aa).

It belongs to the DnaA family. Oligomerizes as a right-handed, spiral filament on DNA at oriC.

The protein localises to the cytoplasm. Functionally, plays an essential role in the initiation and regulation of chromosomal replication. ATP-DnaA binds to the origin of replication (oriC) to initiate formation of the DNA replication initiation complex once per cell cycle. Binds the DnaA box (a 9 base pair repeat at the origin) and separates the double-stranded (ds)DNA. Forms a right-handed helical filament on oriC DNA; dsDNA binds to the exterior of the filament while single-stranded (ss)DNA is stabiized in the filament's interior. The ATP-DnaA-oriC complex binds and stabilizes one strand of the AT-rich DNA unwinding element (DUE), permitting loading of DNA polymerase. After initiation quickly degrades to an ADP-DnaA complex that is not apt for DNA replication. Binds acidic phospholipids. This Shewanella frigidimarina (strain NCIMB 400) protein is Chromosomal replication initiator protein DnaA.